We begin with the raw amino-acid sequence, 61 residues long: Japonicin-1CDYa (61 aa).

Positions 1-22 (MFTLKKSLLLLFFLGVINVSLC) are cleaved as a signal peptide. Positions 23–45 (EEERDADEEERRDDPEERDVEVE) are excised as a propeptide. Cysteines 55 and 61 form a disulfide.

The protein belongs to the frog skin active peptide (FSAP) family. Brevinin subfamily. Expressed by the skin glands.

The protein localises to the secreted. Its function is as follows. Antimicrobial peptide. Has low activity against the Gram-positive bacterium S.aureus (MIC&gt;100 uM) and the Gram-negative bacterium E.coli (MIC=25 uM). Lacks hemolytic activity against human erythrocytes. In Rana dybowskii (Dybovsky's frog), this protein is Japonicin-1CDYa.